Reading from the N-terminus, the 398-residue chain is Arginine biosynthesis bifunctional protein ArgJ (398 aa).

Threonine 148, lysine 174, threonine 185, glutamate 271, asparagine 393, and threonine 398 together coordinate substrate. Catalysis depends on threonine 185, which acts as the Nucleophile.

Belongs to the ArgJ family. In terms of assembly, heterotetramer of two alpha and two beta chains.

The protein localises to the cytoplasm. It catalyses the reaction N(2)-acetyl-L-ornithine + L-glutamate = N-acetyl-L-glutamate + L-ornithine. The catalysed reaction is L-glutamate + acetyl-CoA = N-acetyl-L-glutamate + CoA + H(+). It functions in the pathway amino-acid biosynthesis; L-arginine biosynthesis; L-ornithine and N-acetyl-L-glutamate from L-glutamate and N(2)-acetyl-L-ornithine (cyclic): step 1/1. It participates in amino-acid biosynthesis; L-arginine biosynthesis; N(2)-acetyl-L-ornithine from L-glutamate: step 1/4. Functionally, catalyzes two activities which are involved in the cyclic version of arginine biosynthesis: the synthesis of N-acetylglutamate from glutamate and acetyl-CoA as the acetyl donor, and of ornithine by transacetylation between N(2)-acetylornithine and glutamate. The polypeptide is Arginine biosynthesis bifunctional protein ArgJ (Listeria monocytogenes serovar 1/2a (strain ATCC BAA-679 / EGD-e)).